The chain runs to 364 residues: Dihydroorotate dehydrogenase (quinone) (364 aa).

Residues 61–65 (AGYDK) and Thr85 contribute to the FMN site. Lys65 provides a ligand contact to substrate. 110–114 (NRLGF) serves as a coordination point for substrate. 2 residues coordinate FMN: Asn139 and Asn170. Substrate is bound at residue Asn170. Ser173 (nucleophile) is an active-site residue. Asn175 provides a ligand contact to substrate. FMN is bound by residues Lys215 and Ser243. 244–245 (NT) is a binding site for substrate. Residues Gly266, Gly295, and 316 to 317 (YS) each bind FMN.

This sequence belongs to the dihydroorotate dehydrogenase family. Type 2 subfamily. In terms of assembly, monomer. FMN is required as a cofactor.

It is found in the cell membrane. The catalysed reaction is (S)-dihydroorotate + a quinone = orotate + a quinol. The protein operates within pyrimidine metabolism; UMP biosynthesis via de novo pathway; orotate from (S)-dihydroorotate (quinone route): step 1/1. Its function is as follows. Catalyzes the conversion of dihydroorotate to orotate with quinone as electron acceptor. The polypeptide is Dihydroorotate dehydrogenase (quinone) (Brucella melitensis biotype 2 (strain ATCC 23457)).